The following is a 2053-amino-acid chain: Cell adhesion molecule DSCAML1 (2053 aa).

Positions 1-18 are cleaved as a signal peptide; it reads MWLVTFLLLLDSLHKARP. Ig-like C2-type domains lie at 19–119, 115–217, 226–310, 314–396, 408–501, 506–586, 596–685, 690–784, and 788–885; these read EDVG…NIRI, PNIR…ARLS, PTIL…GILT, PLHV…QTAQ, PRIV…ARIN, PSIR…LSIS, PPLI…RQLI, PRFV…MFLT, and PAMI…LTVQ. At 19–1591 the chain is on the extracellular side; it reads EDVGTSLYFV…AQGEGDDVKK (1573 aa). Cystine bridges form between Cys-47–Cys-103, Cys-146–Cys-198, Cys-247–Cys-294, Cys-336–Cys-386, Cys-429–Cys-485, Cys-526–Cys-575, and Cys-617–Cys-669. Asn-79 carries an N-linked (GlcNAc...) asparagine glycan. Asn-368 and Asn-471 each carry an N-linked (GlcNAc...) asparagine glycan. Asn-666 and Asn-710 each carry an N-linked (GlcNAc...) asparagine glycan. Cys-711 and Cys-767 are joined by a disulfide. N-linked (GlcNAc...) asparagine glycosylation is present at Asn-809. Cys-810 and Cys-867 are disulfide-bonded. 4 consecutive Fibronectin type-III domains span residues 887–984, 989–1088, 1093–1189, and 1193–1288; these read PPDP…TEEA, PPMD…TLED, PPEN…TKED, and PPAG…AGKA. Asn-1144 and Asn-1162 each carry an N-linked (GlcNAc...) asparagine glycan. In terms of domain architecture, Ig-like C2-type 10 spans 1278–1377; sequence EKVTIEPAGK…TGGFDTIIVN (100 aa). A disulfide bridge links Cys-1311 with Cys-1363. Asn-1345 carries N-linked (GlcNAc...) asparagine glycosylation. Fibronectin type-III domains follow at residues 1383 to 1477 and 1478 to 1578; these read PPDQ…THGR and EPSF…TIPP. The N-linked (GlcNAc...) asparagine glycan is linked to Asn-1561. Residues 1592–1612 traverse the membrane as a helical segment; that stretch reads LFTIGCPVILATLGVALLFVV. Topologically, residues 1613–2053 are cytoplasmic; it reads RKKRKEKRLK…GAYSKSYTLV (441 aa). Disordered regions lie at residues 1716 to 1741, 1773 to 1803, 1840 to 1862, and 1974 to 2053; these read LIDMSDIRPGTNPVSRKNVKSAHSTR, HGVTVTESDSYSASLSQDTDKGRNSMVSTES, SSDQMTTGTNENADSMTSMSTPS, and LAMP…YTLV. Residues 1732–1741 are compositionally biased toward basic residues; that stretch reads KNVKSAHSTR. Residues 1773–1789 show a composition bias toward polar residues; that stretch reads HGVTVTESDSYSASLSQ. Over residues 1977-1993 the composition is skewed to pro residues; sequence PAPPAGTAPPAPGPTPS.

In terms of assembly, homodimer; mediates homophilic interactions to promote cell adhesion. In the retina, expressed in the rod photoreceptors, AII amacrine cells and rod bipolar cells (at protein level).

The protein resides in the cell membrane. Its subcellular location is the synapse. Functionally, cell adhesion molecule that plays a role in neuronal self-avoidance. Promotes repulsion between specific neuronal processes of either the same cell or the same subtype of cells. Promotes both isoneuronal self-avoidance for creating an orderly neurite arborization in retinal rod bipolar cells and heteroneuronal self-avoidance to maintain mosaic spacing between AII amacrine cells. Adhesion molecule that promotes lamina-specific synaptic connections in the retina: expressed in specific subsets of interneurons and retinal ganglion cells (RGCs) and promotes synaptic connectivity via homophilic interactions. This Mus musculus (Mouse) protein is Cell adhesion molecule DSCAML1 (Dscaml1).